A 296-amino-acid chain; its full sequence is Tyrosine recombinase XerC (296 aa).

The region spanning 1 to 84 is the Core-binding (CB) domain; sequence MNKIQESFLY…TLRSFYEFWM (84 aa). The region spanning 105–286 is the Tyr recombinase domain; that stretch reads YLPHFFYEEE…SNQQLRKVYL (182 aa). Catalysis depends on residues R145, K169, H238, R241, and H264. The active-site O-(3'-phospho-DNA)-tyrosine intermediate is Y273.

Belongs to the 'phage' integrase family. XerC subfamily. In terms of assembly, forms a cyclic heterotetrameric complex composed of two molecules of XerC and two molecules of XerD.

The protein localises to the cytoplasm. Functionally, site-specific tyrosine recombinase, which acts by catalyzing the cutting and rejoining of the recombining DNA molecules. The XerC-XerD complex is essential to convert dimers of the bacterial chromosome into monomers to permit their segregation at cell division. It also contributes to the segregational stability of plasmids. In Staphylococcus carnosus (strain TM300), this protein is Tyrosine recombinase XerC.